We begin with the raw amino-acid sequence, 534 residues long: 5'-nucleotidase domain-containing protein 3 (534 aa).

The Nucleophile role is filled by D104. Mg(2+) is bound by residues D104 and D106. The active-site Proton donor is D106. 234 to 242 (KEAIRDVHV) is a binding site for substrate. D372 serves as a coordination point for Mg(2+).

It belongs to the 5'(3')-deoxyribonucleotidase family. Mg(2+) is required as a cofactor.

The polypeptide is 5'-nucleotidase domain-containing protein 3 (nt5dc3) (Xenopus tropicalis (Western clawed frog)).